Here is a 583-residue protein sequence, read N- to C-terminus: Ras-specific guanine nucleotide-releasing factor RalGPS2 (583 aa).

The Ras-GEF domain occupies 49–287 (TPEEYAGQIT…YKLSLKIEPG (239 aa)). A disordered region spans residues 283–314 (KIEPGTSTPRSAASREDLVGPEVGASPQSGRK). Residues Ser-293, Ser-296, Ser-308, and Ser-311 each carry the phosphoserine modification. Positions 324 to 327 (PQTP) match the PXXP motif. Thr-326 bears the Phosphothreonine mark. A phosphoserine mark is found at Ser-329 and Ser-343. The residue at position 361 (Thr-361) is a Phosphothreonine. The interval 372–406 (DDSVMEPHAPSRGQAESSTLSSGISIGSSDGSELS) is disordered. Position 374 is a phosphoserine (Ser-374). The span at 387–403 (ESSTLSSGISIGSSDGS) shows a compositional bias: low complexity. Phosphoserine is present on Ser-422. The PH domain occupies 457 to 569 (AVTIQGVLRR…WFKHLSAACQ (113 aa)). A required for stimulation of nucleotide exchange by RALA region spans residues 459–583 (TIQGVLRRKT…QVPTNLMTFE (125 aa)).

In terms of assembly, interacts with the SH3 domains of GRB2 and PLCG1. Interacts with RALA.

It localises to the cytoplasm. The protein localises to the cell membrane. Functionally, guanine nucleotide exchange factor for the small GTPase RALA. May be involved in cytoskeletal organization. May also be involved in the stimulation of transcription in a Ras-independent fashion. In Homo sapiens (Human), this protein is Ras-specific guanine nucleotide-releasing factor RalGPS2 (RALGPS2).